Consider the following 675-residue polypeptide: MAQVAKKILVTCALPYANGSIHLGHMLEHIQADIWVRFQRMRGNQVHFICADDAHGTPIMLKAQQMGIEPEQMIAEMSQEHQQDFAGFAISYDNYHSTHSDENRELSSLIYGRLKANGYIKNRTISQLYDPEKGMFLPDRFVKGTCPKCKAPEQYGDNCEVCGATYSPTELIDPKSAVSGATPVMRESEHFFFDLPAFSDMLQAWTRSGALQEQVANKMQEWFDSGLQQWDITRDAPYFGFEVPDAPGKYFYVWLDAPIGYMGAFKNLCDKRGDLDFDEFWGKDAKTDLYHFIGKDIVYFHSLFWPAMLEGSNFRKPTNLFVHGYVTVNGAKMSKSRGTFIKAGTYLKYLDADCLRYYYAAKLSSRIDDIDLNLEDFVQRVNVDIVNKVVNLASRNAGFINKRFAGQLADQLADPVLYKTFTDAATSIADAYNNRESGKAIREIMALADVANRYVDEQAPWVVAKQEGRDADLHAICSMGINLFRVLMTYLKPVLPSLTERTEAFLNTELTWDSIEQPLLGHSITAFKALFNRIDLDKVNEMVASSKEDMAPATRVTGPLADDPIQETISFDDFAKVDMRIALIQQAEFVEGSDKLLKLTLELGGETRQIFSGIRSAYPDPKALEGRMTVMVANLAPRKMRFGVSEGMVIAAGPGGSDIFLLSPDSGAQPGMQVK.

Residues Pro15 to His25 carry the 'HIGH' region motif. Cys146, Cys149, Cys159, and Cys162 together coordinate Zn(2+). A 'KMSKS' region motif is present at residues Lys332 to Ser336. An ATP-binding site is contributed by Lys335. The region spanning Asp573–Lys675 is the tRNA-binding domain.

The protein belongs to the class-I aminoacyl-tRNA synthetase family. MetG type 1 subfamily. As to quaternary structure, homodimer. It depends on Zn(2+) as a cofactor.

It is found in the cytoplasm. It catalyses the reaction tRNA(Met) + L-methionine + ATP = L-methionyl-tRNA(Met) + AMP + diphosphate. Is required not only for elongation of protein synthesis but also for the initiation of all mRNA translation through initiator tRNA(fMet) aminoacylation. The chain is Methionine--tRNA ligase from Yersinia pseudotuberculosis serotype O:3 (strain YPIII).